The following is a 227-amino-acid chain: 7-cyano-7-deazaguanine synthase (227 aa).

An ATP-binding site is contributed by Leu-9–Leu-19. Residues Cys-189, Cys-199, Cys-202, and Cys-205 each coordinate Zn(2+).

The protein belongs to the QueC family. It depends on Zn(2+) as a cofactor.

It catalyses the reaction 7-carboxy-7-deazaguanine + NH4(+) + ATP = 7-cyano-7-deazaguanine + ADP + phosphate + H2O + H(+). It participates in purine metabolism; 7-cyano-7-deazaguanine biosynthesis. Functionally, catalyzes the ATP-dependent conversion of 7-carboxy-7-deazaguanine (CDG) to 7-cyano-7-deazaguanine (preQ(0)). The sequence is that of 7-cyano-7-deazaguanine synthase from Cupriavidus necator (strain ATCC 17699 / DSM 428 / KCTC 22496 / NCIMB 10442 / H16 / Stanier 337) (Ralstonia eutropha).